A 409-amino-acid polypeptide reads, in one-letter code: E3 ubiquitin-protein ligase MARCHF4 (409 aa).

A signal peptide spans 1–17 (MLMPLGGLLWWWCCCCG). The disordered stretch occupies residues 92 to 133 (GPREAVGRETPPLPPPPPLPPSGDDDWDGPATGPPASLLSSA). Over residues 102 to 112 (PPLPPPPPLPP) the composition is skewed to pro residues. The RING-CH-type zinc-finger motif lies at 154–214 (DSGMRTPLCR…ELCYYKYHVI (61 aa)). Zn(2+)-binding residues include Cys162, Cys165, Cys178, Cys180, His188, Cys191, Cys204, and Cys207. A run of 2 helical transmembrane segments spans residues 242–262 (LGSL…FSPS) and 271–291 (LFQI…GLII). Disordered regions lie at residues 323–372 (EDQK…GPVS) and 389–409 (PHDQ…VTTV). A compositionally biased stretch (polar residues) spans 328–343 (GGRTNLQTSSSAQANL).

Its subcellular location is the golgi apparatus membrane. The enzyme catalyses S-ubiquitinyl-[E2 ubiquitin-conjugating enzyme]-L-cysteine + [acceptor protein]-L-lysine = [E2 ubiquitin-conjugating enzyme]-L-cysteine + N(6)-ubiquitinyl-[acceptor protein]-L-lysine.. It participates in protein modification; protein ubiquitination. E3 ubiquitin-protein ligase that may mediate ubiquitination of MHC-I and CD4, and promote their subsequent endocytosis and sorting to lysosomes via multivesicular bodies. E3 ubiquitin ligases accept ubiquitin from an E2 ubiquitin-conjugating enzyme in the form of a thioester and then directly transfer the ubiquitin to targeted substrates. The sequence is that of E3 ubiquitin-protein ligase MARCHF4 (Marchf4) from Mus musculus (Mouse).